The primary structure comprises 190 residues: Lipid A acyltransferase PagP (190 aa).

The signal sequence occupies residues 1-18 (MKRLISCLTIICALNASA). Catalysis depends on residues His60, Asp103, and Ser104.

It belongs to the lipid A palmitoyltransferase family. Homodimer.

Its subcellular location is the cell outer membrane. The catalysed reaction is a lipid A + a 1,2-diacyl-sn-glycero-3-phosphocholine = a hepta-acyl lipid A + a 2-acyl-sn-glycero-3-phosphocholine. It carries out the reaction a lipid IVA + a 1,2-diacyl-sn-glycero-3-phosphocholine = a lipid IVB + a 2-acyl-sn-glycero-3-phosphocholine. The enzyme catalyses a lipid IIA + a 1,2-diacyl-sn-glycero-3-phosphocholine = a lipid IIB + a 2-acyl-sn-glycero-3-phosphocholine. Transfers a fatty acid residue from the sn-1 position of a phospholipid to the N-linked hydroxyfatty acid chain on the proximal unit of lipid A or its precursors. This is Lipid A acyltransferase PagP from Legionella pneumophila serogroup 1 (strain 2300/99 Alcoy).